The chain runs to 374 residues: Putative glutamate--cysteine ligase 2 (374 aa).

It belongs to the glutamate--cysteine ligase type 2 family. YbdK subfamily.

It carries out the reaction L-cysteine + L-glutamate + ATP = gamma-L-glutamyl-L-cysteine + ADP + phosphate + H(+). Its function is as follows. ATP-dependent carboxylate-amine ligase which exhibits weak glutamate--cysteine ligase activity. The protein is Putative glutamate--cysteine ligase 2 of Verminephrobacter eiseniae (strain EF01-2).